The primary structure comprises 258 residues: Protein CHAPERONE-LIKE PROTEIN OF POR1, chloroplastic (258 aa).

The N-terminal 48 residues, 1 to 48, are a transit peptide targeting the chloroplast; it reads MSSSLLLSGSTVSSSFIAPSKPSLVRNSSKTSLLPFRNVSRSFKTVKC. T49 carries the N-acetylthreonine modification. A J-like domain required for holdase chaperone activity region spans residues 67-122; that stretch reads WDPYKRLGVSPYASEEEIWASRNFLLQQYAGHERSEESIEGAFEKLLMSSFIRRKK. The next 3 membrane-spanning stretches (helical) occupy residues 162–182, 207–227, and 237–257; these read FLFA…GPAF, LIGI…IPMI, and TLEL…CTFL.

The protein belongs to the chaperone-like protein of POR1 protein family. Interacts with PORB in chloroplast. Interacts with PORA during plastid import. Expressed ubiquitously with higher levels in young leaves, flowers, and the root elongation zone.

The protein resides in the mitochondrion membrane. It is found in the plastid. The protein localises to the chloroplast envelope. Its subcellular location is the chloroplast thylakoid membrane. In terms of biological role, essential protein required during embryogenesis. Exhibits holdase chaperone activity involved in the stabilization of NADPH:protochlorophyllide oxidoreductase (POR) proteins against photooxidative stress during POR proteins import into chloroplasts. Required for chloroplast biogenesis and development. When expressed in yeast, triggers mitochondria-mediated cell death associated with the loss of mitochondrial membrane potential. In Arabidopsis thaliana (Mouse-ear cress), this protein is Protein CHAPERONE-LIKE PROTEIN OF POR1, chloroplastic.